The primary structure comprises 126 residues: Sperm-specific H1/protamine-like protein type 2 (126 aa).

One can recognise an H15 domain in the interval 5-84 (KKPTTLSMIV…GATGSFRVGK (80 aa)). Positions 74-126 (SGATGSFRVGKAPASPKKAKKAKSPKKKSSKKSKNKSNNAKAKKSPKKKADSN) are disordered. Over residues 90–120 (KKAKKAKSPKKKSSKKSKNKSNNAKAKKSPK) the composition is skewed to basic residues.

OE2 and OE3 are produced by post-translational cleavage of a common precursor. Sperm.

It localises to the nucleus. Its subcellular location is the chromosome. In terms of biological role, linker histones are implicated in chromatin remodeling and/or transcriptional regulation during spermiogenesis, the process of spermatid maturation into spermatozoa. Protamines substitute for histones in the chromatin of sperm during the haploid phase of spermatogenesis. They compact sperm DNA into a highly condensed, stable and inactive complex. The sequence is that of Sperm-specific H1/protamine-like protein type 2 from Ostrea edulis (Native oyster).